Reading from the N-terminus, the 206-residue chain is 2,3-bisphosphoglycerate-dependent phosphoglycerate mutase (206 aa).

Substrate-binding positions include 9–16, 22–23, R61, 88–91, K99, 115–116, and 159–160; these read RHGQSEWN, TG, ERNY, RR, and GN. The active-site Tele-phosphohistidine intermediate is the H10. E88 acts as the Proton donor/acceptor in catalysis.

Belongs to the phosphoglycerate mutase family. BPG-dependent PGAM subfamily. In terms of assembly, homodimer.

It carries out the reaction (2R)-2-phosphoglycerate = (2R)-3-phosphoglycerate. It functions in the pathway carbohydrate degradation; glycolysis; pyruvate from D-glyceraldehyde 3-phosphate: step 3/5. Its function is as follows. Catalyzes the interconversion of 2-phosphoglycerate and 3-phosphoglycerate. In Bartonella tribocorum (strain CIP 105476 / IBS 506), this protein is 2,3-bisphosphoglycerate-dependent phosphoglycerate mutase.